The sequence spans 459 residues: ATP-dependent RNA helicase me31b (459 aa).

A recA-like domain 1 region spans residues 1–267 (MMTEKLNSGH…EINLMEELTL (267 aa)). A phosphoserine mark is found at S8 and S29. The Q motif signature appears at 58-86 (NEFEEFCLKRELLMGIFEKGWERPSPIQE). The region spanning 89–259 (IPIALSGKDV…EKHLREPYEI (171 aa)) is the Helicase ATP-binding domain. 102–109 (AKNGTGKT) is an ATP binding site. The DEAD box motif lies at 207 to 210 (DEAD). Residues 264–431 (ELTLKGVTQY…PKVIDPALYV (168 aa)) form a gyf binding region. In terms of domain architecture, Helicase C-terminal spans 269–429 (GVTQYYAFVQ…PIPKVIDPAL (161 aa)). The recA-like domain 2 stretch occupies residues 432–459 (ANVGASVGDTCNNSDLNNSANEEGNVSK). Phosphoserine is present on S450.

It belongs to the DEAD box helicase family. DDX6/DHH1 subfamily. As to quaternary structure, conserved component of different types of multiprotein ribonucleoprotein complexes (RNPs) that form distinct germ granules (P-body, nuage, sponge body or polar granules) and P-body-like neuronal RNPs. Consequently it interacts with a wide variety of proteins, some of which appear to be common interactive partners in almost all RNPs types i.e. cup and tral, whereas other interactions are specific to a germ granule/RNP. Core functional components in me31B-containing RNPs include RNA regulatory proteins (such as translational repressor, RNA-decapping and exonuclease proteins), RNA localization proteins and additional proteins depending on the biological context of the RNPs. In the P-body RNPs, interacts with at least the translation repressor proteins tral, cup and Edc3, and the mRNA localization factor yps. Interaction with tral or Edc3 is required for translation repression and possibly RNA decapping; binding to tral and Edc3 is mutually exclusive. In the nuage and germ plasm polar granule RNPs, interacts with at least tral, cup, and additional proteins required for assembly and function of the germ granules such as tud, vas and aub. Interacts (when dimethylated on Arg residues) with tud; interaction is RNA-independent. Component of the osk RNP complex, which is composed of at least me31B, exu, yps, aret/bruno, cup, and the mRNA of osk. Component of the nanos RNP complex, which is composed of at least smg, cup, tral, me31B, the CCR4-NOT complex members Rga/NOT2 and Caf1-55, and the mRNA of nanos (nos). Interacts with tral and piRNA pathway components papi and AGO3; promotes interaction between nuage RNPs and the piRNA-mediated transposon silencing. Forms a RNP containing at least me31B, eIF4E1, cup, tral and pAbp; this interaction is required for the translational silencing of maternal mRNAs during the maternal-to-zygotic transition. In the sponge body, forms a RNP containing at least me31B, exu, yps and the mRNA of osk; interactions with exu and yps are RNA dependent. Component of a neuronal RNP, at least composed of me31B, tral and Fmr1. Component of the Atx2-Not1 repressor complex, composed of at least me31B, Atx2, tyf and pAbp. Interacts (via the C-terminus) with Atx2, tyf, pAbp and Lsm12a. Interacts (via RecA-like domain 2) with 4EHP-GYF2 complex member Gyf (via the me31B binding motif). Interacts with 4E-T, Edc3 and Patr-1. Symmetrically dimethylated on arginine residues. Ubiquitously expressed throughout the brain (at protein level). Expressed in the olfactory system including the antennal lobes, projection neurons, local interneurons, mushroom-body Kenyon cells and glial cells (at protein level).

The protein resides in the cytoplasm. The protein localises to the cytoplasmic ribonucleoprotein granule. It localises to the P-body. Its subcellular location is the endoplasmic reticulum. It is found in the cell projection. The protein resides in the dendrite. The enzyme catalyses ATP + H2O = ADP + phosphate + H(+). In terms of biological role, ATP-dependent RNA helicase which is a core component of a variety of ribonucleoprotein complexes (RNPs) that play critical roles in translational repression and mRNA decapping during embryogenesis, oogenesis, neurogenesis and neurotransmission. Recruits core components and translational repressors to some RNP complexes, and mediates RNP aggregation into processing granules such as P-bodies. As part of a RNP complex containing tral, eIF4E1, cup, and pAbp, involved in RNP-mediated translational repression of maternal mRNAs during oogenesis and embryogenesis. As part of a RNP complex containing tral and the RNA localization factors exu and yps, mediates translational silencing of mRNAs such as osk/oskar and bcd/bicoid during their transport to the oocyte in order to prevent their translation until they reach their positional destinations. In neurons and possibly imaginal disks, involved in miRNA-mediated translational repression, possibly in association with components of the piRNA transposon silencing pathway. Involved in RNA localization and protein trafficking in the oocyte. As part of an ER-associated RNP containing tral, cup and yps, required for tral-dependent ER exit site formation and consequently efficient trafficking of proteins such as grk and yl through the secretory pathway. Component of neuron RNPs that mediate transport and translation of neuronal RNAs, including translation repression of synaptic transcripts in preparation for their dendritic targeting. As part of the Atx2-Not1 repressor complex promotes Not1-dependent post-transcriptional gene silencing in adult circadian pacemaker neurons in order to sustain high-amplitude circadian rhythms and Pdf cycling in a per-independent manner. Promotes the interaction between Atx2 and Not1 within the Atx2-Not1 RNP complex. Recruited to the 4EHP-GYF2 complex by Gyf, where it plays a role in 4EHP-GYF2 mediated translational repression and mRNA decay. In Drosophila melanogaster (Fruit fly), this protein is ATP-dependent RNA helicase me31b (me31B).